The primary structure comprises 623 residues: Zona pellucida sperm-binding protein 1 (623 aa).

The N-terminal stretch at methionine 1 to glycine 20 is a signal peptide. A Pyrrolidone carboxylic acid modification is found at glutamine 21. The Extracellular portion of the chain corresponds to glutamine 21–methionine 590. Residues asparagine 49 and asparagine 68 are each glycosylated (N-linked (GlcNAc...) asparagine). Residues isoleucine 182–proline 201 form a disordered region. Residues glutamate 226–asparagine 266 form the P-type domain. Cystine bridges form between cysteine 228–cysteine 253, cysteine 237–cysteine 252, and cysteine 247–cysteine 262. A glycan (N-linked (GlcNAc...) asparagine) is linked at asparagine 240. One can recognise a ZP domain in the interval glutamine 271–glycine 542. Asparagine 371 is a glycosylation site (N-linked (GlcNAc...) asparagine). Cysteine 449 and cysteine 470 form a disulfide bridge. Residues arginine 547–tyrosine 623 constitute a propeptide, removed in mature form. Residues asparagine 554 and asparagine 585 are each glycosylated (N-linked (GlcNAc...) asparagine). The helical transmembrane segment at leucine 591–tryptophan 611 threads the bilayer. Over alanine 612–tyrosine 623 the chain is Cytoplasmic.

The protein belongs to the ZP domain family. ZPB subfamily. As to quaternary structure, polymers of ZP2 and ZP3 organized into long filaments cross-linked by ZP1 homodimers. Interacts with ZP3. In terms of processing, proteolytically cleaved before the transmembrane segment to yield the secreted ectodomain incorporated in the zona pellucida. O-glycosylated. In terms of tissue distribution, expressed in oocytes.

The protein localises to the zona pellucida. It is found in the cell membrane. Its function is as follows. Component of the zona pellucida, an extracellular matrix surrounding oocytes which mediates sperm binding, induction of the acrosome reaction and prevents post-fertilization polyspermy. The zona pellucida is composed of 3 to 4 glycoproteins, ZP1, ZP2, ZP3, and ZP4. ZP1 ensures the structural integrity of the zona pellucida. In Mus musculus (Mouse), this protein is Zona pellucida sperm-binding protein 1 (Zp1).